Reading from the N-terminus, the 123-residue chain is uncharacterized protein (123 aa).

The interval 89–123 (GVGGRKLGSEGQSLSENSEQRSLMRWGCGGSSERR) is disordered. Residues 98–109 (EGQSLSENSEQR) show a composition bias toward polar residues.

This is an uncharacterized protein from Encephalitozoon cuniculi (strain GB-M1) (Microsporidian parasite).